Here is a 72-residue protein sequence, read N- to C-terminus: Heat shock factor-binding protein 1-like protein 1 (72 aa).

The stretch at 12–62 (DLLQNAAENLLLEVEEHFQALTTTLNLRMEEMGSRIEDLQRNVDDLMTQAG) forms a coiled coil.

Belongs to the HSBP1 family.

The sequence is that of Heat shock factor-binding protein 1-like protein 1 (Hsbp1l1) from Mus musculus (Mouse).